The primary structure comprises 156 residues: ATP synthase subunit b (156 aa).

The chain crosses the membrane as a helical span at residues 3-23; sequence ITLTIFAQALAFAGLIWIVAT.

It belongs to the ATPase B chain family. F-type ATPases have 2 components, F(1) - the catalytic core - and F(0) - the membrane proton channel. F(1) has five subunits: alpha(3), beta(3), gamma(1), delta(1), epsilon(1). F(0) has three main subunits: a(1), b(2) and c(10-14). The alpha and beta chains form an alternating ring which encloses part of the gamma chain. F(1) is attached to F(0) by a central stalk formed by the gamma and epsilon chains, while a peripheral stalk is formed by the delta and b chains.

The protein resides in the cell inner membrane. Functionally, f(1)F(0) ATP synthase produces ATP from ADP in the presence of a proton or sodium gradient. F-type ATPases consist of two structural domains, F(1) containing the extramembraneous catalytic core and F(0) containing the membrane proton channel, linked together by a central stalk and a peripheral stalk. During catalysis, ATP synthesis in the catalytic domain of F(1) is coupled via a rotary mechanism of the central stalk subunits to proton translocation. Component of the F(0) channel, it forms part of the peripheral stalk, linking F(1) to F(0). The protein is ATP synthase subunit b of Xanthomonas axonopodis pv. citri (strain 306).